The following is a 261-amino-acid chain: Thiamine thiazole synthase (261 aa).

NAD(+) contacts are provided by residues Ala-33, 52-53 (ER), Gly-60, Val-124, and 152-154 (HVD). Fe cation-binding residues include Asp-154 and His-169. Met-219 contacts NAD(+). Arg-229 is a binding site for glycine.

Belongs to the THI4 family. As to quaternary structure, homooctamer; tetramer of dimers. Fe(2+) serves as cofactor.

It carries out the reaction hydrogen sulfide + glycine + NAD(+) = ADP-5-ethyl-4-methylthiazole-2-carboxylate + nicotinamide + 3 H2O + H(+). The protein operates within cofactor biosynthesis; thiamine diphosphate biosynthesis. Involved in the biosynthesis of the thiazole moiety of thiamine. Catalyzes the conversion of NAD and glycine to adenosine diphosphate 5-(2-hydroxyethyl)-4-methylthiazole-2-carboxylate (ADT), an adenylated thiazole intermediate, using free sulfide as a source of sulfur. This chain is Thiamine thiazole synthase, found in Pyrobaculum islandicum (strain DSM 4184 / JCM 9189 / GEO3).